Reading from the N-terminus, the 597-residue chain is Arginine--tRNA ligase (597 aa).

Positions 138-148 (ANPTGPMHVGH) match the 'HIGH' region motif.

Belongs to the class-I aminoacyl-tRNA synthetase family. Monomer.

Its subcellular location is the cytoplasm. It carries out the reaction tRNA(Arg) + L-arginine + ATP = L-arginyl-tRNA(Arg) + AMP + diphosphate. The sequence is that of Arginine--tRNA ligase from Nitrobacter winogradskyi (strain ATCC 25391 / DSM 10237 / CIP 104748 / NCIMB 11846 / Nb-255).